The chain runs to 249 residues: Triosephosphate isomerase (249 aa).

A substrate-binding site is contributed by 9-11 (NWK). Histidine 95 acts as the Electrophile in catalysis. Glutamate 166 (proton acceptor) is an active-site residue. Residues glycine 172, serine 211, and 232–233 (GG) each bind substrate.

This sequence belongs to the triosephosphate isomerase family. Homodimer.

Its subcellular location is the cytoplasm. It catalyses the reaction D-glyceraldehyde 3-phosphate = dihydroxyacetone phosphate. Its pathway is carbohydrate biosynthesis; gluconeogenesis. The protein operates within carbohydrate degradation; glycolysis; D-glyceraldehyde 3-phosphate from glycerone phosphate: step 1/1. Involved in the gluconeogenesis. Catalyzes stereospecifically the conversion of dihydroxyacetone phosphate (DHAP) to D-glyceraldehyde-3-phosphate (G3P). The chain is Triosephosphate isomerase from Legionella pneumophila (strain Paris).